We begin with the raw amino-acid sequence, 353 residues long: Mitochondrial import inner membrane translocase subunit TIM50 (353 aa).

A mitochondrion-targeting transit peptide spans 1-44; sequence MAASAAVFSRLRSGLRLGSRGLCTRLATPPRRAPDQAAEIGSRG. The tract at residues 25-60 is disordered; it reads RLATPPRRAPDQAAEIGSRGSTKAQGPQQQPGSEGP. Ser-45 carries the phosphoserine modification. The Mitochondrial matrix segment spans residues 45–65; that stretch reads STKAQGPQQQPGSEGPSYAKK. Low complexity predominate over residues 49–60; it reads QGPQQQPGSEGP. A helical membrane pass occupies residues 66–86; the sequence is VALWLAGLLGAGGTVSVVYIF. Residues 87 to 353 are Mitochondrial intermembrane-facing; it reads GNNPVDENGA…SRLWPRSKQP (267 aa). The 144-residue stretch at 143-286 folds into the FCP1 homology domain; it reads YYQPPYTLVL…LDLSAFLKTI (144 aa). Ser-341 bears the Phosphoserine mark.

Belongs to the TIM50 family. As to quaternary structure, component of the TIM23 complex at least composed of TIMM23, TIMM17 (TIMM17A or TIMM17B) and TIMM50; within this complex, directly interacts with TIMM23. The complex interacts with the TIMM44 component of the PAM complex and with DNAJC15. In terms of assembly, interacts with COIL and snRNPs. Widely expressed. Expressed at higher level in brain, kidney and liver (at protein level).

The protein resides in the mitochondrion inner membrane. The protein localises to the nucleus speckle. Functionally, essential component of the TIM23 complex, a complex that mediates the translocation of transit peptide-containing proteins across the mitochondrial inner membrane. Has some phosphatase activity in vitro; however such activity may not be relevant in vivo. In terms of biological role, may participate in the release of snRNPs and SMN from the Cajal body. The sequence is that of Mitochondrial import inner membrane translocase subunit TIM50 (TIMM50) from Homo sapiens (Human).